Here is a 118-residue protein sequence, read N- to C-terminus: Probable non-functional immunoglobulin lambda variable 1-50 (118 aa).

Positions 1–19 (MAWSSLLLTLLAHCTGSWA) are cleaved as a signal peptide. The interval 20–44 (QSVLTQPPSVSGAPGQRVTISCTGS) is framework-1. One can recognise an Ig-like domain in the interval 20–118 (QSVLTQPPSV…CKAWDNSLNA (99 aa)). Cys41 and Cys109 are disulfide-bonded. The interval 45-53 (SSNIGAGYV) is complementarity-determining-1. The tract at residues 54–70 (VHWYQQLPGTAPKLLIY) is framework-2. Residues 71–73 (GNS) are complementarity-determining-2. The tract at residues 74–109 (NRPSGVPDQFSGSKSGTSASLAITGLQSEDEADYYC) is framework-3. A complementarity-determining-3 region spans residues 110–118 (KAWDNSLNA).

Immunoglobulins are composed of two identical heavy chains and two identical light chains; disulfide-linked.

It is found in the secreted. The protein resides in the cell membrane. Probable non-functional open reading frame (ORF) of V region of the variable domain of immunoglobulin light chains. Non-functional ORF generally cannot participate in the synthesis of a productive immunoglobulin chain due to altered V-(D)-J or switch recombination and/or splicing site (at mRNA level) and/or conserved amino acid change (protein level). Immunoglobulins, also known as antibodies, are membrane-bound or secreted glycoproteins produced by B lymphocytes. In the recognition phase of humoral immunity, the membrane-bound immunoglobulins serve as receptors which, upon binding of a specific antigen, trigger the clonal expansion and differentiation of B lymphocytes into immunoglobulins-secreting plasma cells. Secreted immunoglobulins mediate the effector phase of humoral immunity, which results in the elimination of bound antigens. The antigen binding site is formed by the variable domain of one heavy chain, together with that of its associated light chain. Thus, each immunoglobulin has two antigen binding sites with remarkable affinity for a particular antigen. The variable domains are assembled by a process called V-(D)-J rearrangement and can then be subjected to somatic hypermutations which, after exposure to antigen and selection, allow affinity maturation for a particular antigen. The polypeptide is Probable non-functional immunoglobulin lambda variable 1-50 (Homo sapiens (Human)).